A 276-amino-acid chain; its full sequence is Type II pantothenate kinase (276 aa).

8-15 (DAGGTLTK) provides a ligand contact to ATP. Glutamate 76 (proton acceptor) is an active-site residue. Residues threonine 105, 127–131 (GGTIM), phenylalanine 143, and serine 230 contribute to the ATP site.

Belongs to the type II pantothenate kinase family. As to quaternary structure, homodimer.

Its subcellular location is the cytoplasm. It carries out the reaction (R)-pantothenate + ATP = (R)-4'-phosphopantothenate + ADP + H(+). Its pathway is cofactor biosynthesis; coenzyme A biosynthesis; CoA from (R)-pantothenate: step 1/5. Catalyzes the phosphorylation of pantothenate (Pan), the first step in CoA biosynthesis. The polypeptide is Type II pantothenate kinase (Bacillus cereus (strain AH820)).